A 559-amino-acid chain; its full sequence is Germacrene A synthase (559 aa).

Residues aspartate 312, aspartate 316, aspartate 456, threonine 460, and glutamate 464 each contribute to the Mg(2+) site. The short motif at 312–316 is the DDXXD motif element; sequence DDTYD.

The protein belongs to the terpene synthase family. Monomer. Mg(2+) is required as a cofactor. In terms of tissue distribution, expressed in glandular trichomes of all aerial tissues, with highest levels in tissues accumulating parthenolide (e.g. flowers and, to some extent, leaves).

The catalysed reaction is (2E,6E)-farnesyl diphosphate = (+)-(R)-germacrene A + diphosphate. It participates in secondary metabolite biosynthesis; terpenoid biosynthesis. In terms of biological role, sesquiterpene synthase involved in germacrene A biosynthesis. Germacrene A is a precursor of several sesquiterpene lactones. The protein is Germacrene A synthase of Tanacetum parthenium (Feverfew).